The following is a 432-amino-acid chain: Adenylosuccinate synthetase (432 aa).

Residues 13–19 (GDEGKGK) and 41–43 (GHT) contribute to the GTP site. Catalysis depends on Asp14, which acts as the Proton acceptor. 2 residues coordinate Mg(2+): Asp14 and Gly41. IMP is bound by residues 14–17 (DEGK), 39–42 (NAGH), Thr130, Arg144, Gln225, Thr240, and Arg304. His42 acts as the Proton donor in catalysis. Residue 300–306 (ATTGRRR) coordinates substrate. GTP is bound by residues Arg306, 332-334 (KLD), and 415-417 (STG).

This sequence belongs to the adenylosuccinate synthetase family. In terms of assembly, homodimer. Mg(2+) serves as cofactor.

The protein localises to the cytoplasm. The enzyme catalyses IMP + L-aspartate + GTP = N(6)-(1,2-dicarboxyethyl)-AMP + GDP + phosphate + 2 H(+). It participates in purine metabolism; AMP biosynthesis via de novo pathway; AMP from IMP: step 1/2. Functionally, plays an important role in the de novo pathway of purine nucleotide biosynthesis. Catalyzes the first committed step in the biosynthesis of AMP from IMP. In Erwinia tasmaniensis (strain DSM 17950 / CFBP 7177 / CIP 109463 / NCPPB 4357 / Et1/99), this protein is Adenylosuccinate synthetase.